A 446-amino-acid chain; its full sequence is Glutamine synthetase (446 aa).

A GS beta-grasp domain is found at Glu-18–Gly-103. A GS catalytic domain is found at Pro-110 to Tyr-446. Residues Glu-134 and Glu-136 each contribute to the Mg(2+) site. ATP is bound at residue Glu-186. Glu-191 and Glu-198 together coordinate Mg(2+). L-glutamate-binding positions include Asn-242–Gly-243 and Gly-243. Mg(2+) is bound at residue His-247. An ATP-binding site is contributed by Ser-251. The L-glutamate site is built by Arg-300, Glu-306, and Arg-318. ATP is bound by residues Arg-318 and Arg-323. Glu-335 serves as a coordination point for Mg(2+). Position 337 (Arg-337) interacts with L-glutamate.

Belongs to the glutamine synthetase family. Oligomer of 12 subunits arranged in the form of two hexagons. In its feedback-inhibited form, interacts with TnrA in order to block its DNA-binding activity. The cofactor is Mg(2+).

Its subcellular location is the cytoplasm. The enzyme catalyses L-glutamate + NH4(+) + ATP = L-glutamine + ADP + phosphate + H(+). Its activity is regulated as follows. Inhibited by glutamine. Functionally, glutamine synthetase (GS) is an unusual multitasking protein that functions as an enzyme, a transcription coregulator, and a chaperone in ammonium assimilation and in the regulation of genes involved in nitrogen metabolism. It catalyzes the ATP-dependent biosynthesis of glutamine from glutamate and ammonia. Feedback-inhibited GlnA also interacts with and regulates the activity of the transcriptional regulator TnrA. During nitrogen limitation, TnrA is in its DNA-binding active state and turns on the transcription of genes required for nitrogen assimilation. Under conditions of nitrogen excess, feedback-inhibited GlnA forms a stable complex with TnrA, which inhibits its DNA-binding activity. In contrast, feedback-inhibited GlnA acts as a chaperone to stabilize the DNA-binding activity of GlnR, which represses the transcription of nitrogen assimilation genes. The chain is Glutamine synthetase from Staphylococcus epidermidis (strain ATCC 35984 / DSM 28319 / BCRC 17069 / CCUG 31568 / BM 3577 / RP62A).